A 292-amino-acid polypeptide reads, in one-letter code: Chronophin (292 aa).

Aspartate 25 functions as the Nucleophile in the catalytic mechanism. Positions 25 and 27 each coordinate Mg(2+). Aspartate 27 (proton donor) is an active-site residue. Residues 58-60, histidine 178, and lysine 209 contribute to the substrate site; that span reads SNN. Residue aspartate 234 coordinates Mg(2+).

This sequence belongs to the HAD-like hydrolase superfamily. In terms of assembly, homodimer. Mg(2+) is required as a cofactor. Ubiquitous. highly expressed in brain (at protein level).

It localises to the cytoplasm. It is found in the cytosol. Its subcellular location is the cytoskeleton. The protein resides in the cell projection. The protein localises to the ruffle membrane. It localises to the lamellipodium membrane. It is found in the cell membrane. The catalysed reaction is pyridoxal 5'-phosphate + H2O = pyridoxal + phosphate. It catalyses the reaction pyridoxine 5'-phosphate + H2O = pyridoxine + phosphate. It carries out the reaction pyridoxamine + phosphate = pyridoxamine 5'-phosphate + H2O. The enzyme catalyses O-phospho-L-seryl-[protein] + H2O = L-seryl-[protein] + phosphate. Inhibited by beryllium trifluoride. Functionally, functions as a pyridoxal phosphate (PLP) phosphatase, which also catalyzes the dephosphorylation of pyridoxine 5'-phosphate (PNP) and pyridoxamine 5'-phosphate (PMP), with order of substrate preference PLP &gt; PNP &gt; PMP and therefore plays a role in vitamin B6 metabolism. Also functions as a protein serine phosphatase that specifically dephosphorylates 'Ser-3' in proteins of the actin-depolymerizing factor (ADF)/cofilin family like CFL1 and DSTN. Thereby, regulates cofilin-dependent actin cytoskeleton reorganization, being required for normal progress through mitosis and normal cytokinesis. Does not dephosphorylate phosphothreonines in LIMK1. Does not dephosphorylate peptides containing phosphotyrosine. This is Chronophin from Mus musculus (Mouse).